We begin with the raw amino-acid sequence, 134 residues long: Small ribosomal subunit protein uS12 (134 aa).

Residues 1 to 26 (MPTTQQLLRKGRTTLQKKSKVPALKG) are disordered. Residues 9-20 (RKGRTTLQKKSK) show a composition bias toward basic residues. 3-methylthioaspartic acid is present on D89. Positions 103 to 134 (DTQGVKDRNKSRSKYGTKKPKAGAAAAGAKKK) are disordered. Residues 113-123 (SRSKYGTKKPK) are compositionally biased toward basic residues. Positions 124–134 (AGAAAAGAKKK) are enriched in low complexity.

Belongs to the universal ribosomal protein uS12 family. Part of the 30S ribosomal subunit. Contacts proteins S8 and S17. May interact with IF1 in the 30S initiation complex.

Functionally, with S4 and S5 plays an important role in translational accuracy. In terms of biological role, interacts with and stabilizes bases of the 16S rRNA that are involved in tRNA selection in the A site and with the mRNA backbone. Located at the interface of the 30S and 50S subunits, it traverses the body of the 30S subunit contacting proteins on the other side and probably holding the rRNA structure together. The combined cluster of proteins S8, S12 and S17 appears to hold together the shoulder and platform of the 30S subunit. The protein is Small ribosomal subunit protein uS12 of Deinococcus geothermalis (strain DSM 11300 / CIP 105573 / AG-3a).